The following is a 209-amino-acid chain: Large ribosomal subunit protein uL3 (209 aa).

The disordered stretch occupies residues 132–153 (ATHGNSLSHRVPGSIGQNQTPG). Q150 carries the N5-methylglutamine modification.

Belongs to the universal ribosomal protein uL3 family. Part of the 50S ribosomal subunit. Forms a cluster with proteins L14 and L19. Post-translationally, methylated by PrmB.

In terms of biological role, one of the primary rRNA binding proteins, it binds directly near the 3'-end of the 23S rRNA, where it nucleates assembly of the 50S subunit. This chain is Large ribosomal subunit protein uL3, found in Erwinia tasmaniensis (strain DSM 17950 / CFBP 7177 / CIP 109463 / NCPPB 4357 / Et1/99).